A 341-amino-acid chain; its full sequence is Glycerol-3-phosphate dehydrogenase [NAD(P)+] (341 aa).

4 residues coordinate NADPH: S15, W16, R36, and K110. The sn-glycerol 3-phosphate site is built by K110, G139, and S141. A143 lines the NADPH pocket. Sn-glycerol 3-phosphate contacts are provided by K194, D247, S257, R258, and N259. The Proton acceptor role is filled by K194. Residue R258 participates in NADPH binding. V282 and E284 together coordinate NADPH.

Belongs to the NAD-dependent glycerol-3-phosphate dehydrogenase family.

The protein localises to the cytoplasm. It carries out the reaction sn-glycerol 3-phosphate + NAD(+) = dihydroxyacetone phosphate + NADH + H(+). The enzyme catalyses sn-glycerol 3-phosphate + NADP(+) = dihydroxyacetone phosphate + NADPH + H(+). It functions in the pathway membrane lipid metabolism; glycerophospholipid metabolism. Functionally, catalyzes the reduction of the glycolytic intermediate dihydroxyacetone phosphate (DHAP) to sn-glycerol 3-phosphate (G3P), the key precursor for phospholipid synthesis. The sequence is that of Glycerol-3-phosphate dehydrogenase [NAD(P)+] from Xanthomonas euvesicatoria pv. vesicatoria (strain 85-10) (Xanthomonas campestris pv. vesicatoria).